Here is a 322-residue protein sequence, read N- to C-terminus: Ras-like protein 2 (322 aa).

Residues 20 to 25, 36 to 42, 66 to 67, and 123 to 126 each bind GTP; these read GVGKSA, VDEYDPT, AG, and NKSD. An Effector region motif is present at residues 39 to 47; it reads YDPTIEDSY. Lys-131 is covalently cross-linked (Glycyl lysine isopeptide (Lys-Gly) (interchain with G-Cter in ubiquitin)). Residue 153-155 coordinates GTP; the sequence is SAK. The segment at 178-322 is disordered; it reads YNKTLTENDN…SGSGGCCIIS (145 aa). A compositionally biased stretch (polar residues) spans 180 to 205; the sequence is KTLTENDNSKQTSQDTKGSGANSVPR. Ser-198, Ser-202, Ser-207, Ser-214, Ser-235, and Ser-238 each carry phosphoserine. The span at 215 to 252 shows a compositional bias: polar residues; sequence NAANGKNVNSSTTVVNARNASIESKTGLAGNQATNGKT. Over residues 261–284 the composition is skewed to low complexity; it reads NSTGQAGQANAQSANTVNNRVNNN. Over residues 285-294 the composition is skewed to polar residues; the sequence is SKAGQVSNAK. A lipid anchor (S-palmitoyl cysteine) is attached at Cys-318. The residue at position 319 (Cys-319) is a Cysteine methyl ester. Cys-319 carries S-farnesyl cysteine lipidation. A propeptide spans 320-322 (removed in mature form); it reads IIS.

Belongs to the small GTPase superfamily. Ras family. Post-translationally, farnesylated by RAM1-RAM2, which is required for targeting RAS2 to the cytoplasmic site of the endoplasmic reticulum, where proteolytic processing of the C-terminus by RCE1 and methylation of the resulting carboxyl group by STE14 occurs. Palmitoylated by the ERF2-SHR5 complex, which is required for proper plasma membrane localization of RAS2.

The protein localises to the cell membrane. The catalysed reaction is GTP + H2O = GDP + phosphate + H(+). Alternates between an inactive form bound to GDP and an active form bound to GTP. Activated by guanine nucleotide-exchange factor (GEF) CDC25 and inactivated by GTPase-activating proteins (GAPs) IRA1 and IRA2. The S.cerevisiae Ras proteins modulate the activity of the adenylate cyclase catalytic subunit and therefore affect the biosynthesis of cyclic-AMP. The polypeptide is Ras-like protein 2 (RAS2) (Saccharomyces cerevisiae (strain ATCC 204508 / S288c) (Baker's yeast)).